The chain runs to 192 residues: Imidazoleglycerol-phosphate dehydratase (192 aa).

This sequence belongs to the imidazoleglycerol-phosphate dehydratase family.

It is found in the cytoplasm. The enzyme catalyses D-erythro-1-(imidazol-4-yl)glycerol 3-phosphate = 3-(imidazol-4-yl)-2-oxopropyl phosphate + H2O. The protein operates within amino-acid biosynthesis; L-histidine biosynthesis; L-histidine from 5-phospho-alpha-D-ribose 1-diphosphate: step 6/9. The polypeptide is Imidazoleglycerol-phosphate dehydratase (Hydrogenobaculum sp. (strain Y04AAS1)).